We begin with the raw amino-acid sequence, 445 residues long: Glucose-6-phosphate isomerase (445 aa).

The active-site Proton donor is the Glu-284. Catalysis depends on residues His-305 and Lys-419.

This sequence belongs to the GPI family.

The protein localises to the cytoplasm. The catalysed reaction is alpha-D-glucose 6-phosphate = beta-D-fructose 6-phosphate. Its pathway is carbohydrate biosynthesis; gluconeogenesis. The protein operates within carbohydrate degradation; glycolysis; D-glyceraldehyde 3-phosphate and glycerone phosphate from D-glucose: step 2/4. Catalyzes the reversible isomerization of glucose-6-phosphate to fructose-6-phosphate. The protein is Glucose-6-phosphate isomerase of Leptospira interrogans serogroup Icterohaemorrhagiae serovar Lai (strain 56601).